A 122-amino-acid chain; its full sequence is Large ribosomal subunit protein uL14 (122 aa).

The protein belongs to the universal ribosomal protein uL14 family. Part of the 50S ribosomal subunit. Forms a cluster with proteins L3 and L19. In the 70S ribosome, L14 and L19 interact and together make contacts with the 16S rRNA in bridges B5 and B8.

Binds to 23S rRNA. Forms part of two intersubunit bridges in the 70S ribosome. The protein is Large ribosomal subunit protein uL14 of Picosynechococcus sp. (strain ATCC 27264 / PCC 7002 / PR-6) (Agmenellum quadruplicatum).